A 405-amino-acid polypeptide reads, in one-letter code: Pentatricopeptide repeat-containing protein At1g11630, mitochondrial (405 aa).

Residues 1 to 72 (MAFLFRIRTS…RSTSLSPDYH (72 aa)) constitute a mitochondrion transit peptide. PPR repeat units follow at residues 74–108 (DRII…QPDP), 110–144 (SESF…EIPR), 145–180 (TVKS…GIEP), 181–215 (DLET…WIKP), 216–250 (TAAS…GVHV), 251–285 (GVAT…RMRP), 286–320 (NSVT…GYKP), 321–355 (DSEC…NWVP), and 356–386 (SFSV…VKEK).

The protein belongs to the PPR family. P subfamily.

Its subcellular location is the mitochondrion. The protein is Pentatricopeptide repeat-containing protein At1g11630, mitochondrial of Arabidopsis thaliana (Mouse-ear cress).